Consider the following 196-residue polypeptide: Probable malonic semialdehyde reductase RutE (196 aa).

This sequence belongs to the nitroreductase family. HadB/RutE subfamily. FMN serves as cofactor.

The catalysed reaction is 3-hydroxypropanoate + NADP(+) = 3-oxopropanoate + NADPH + H(+). Functionally, may reduce toxic product malonic semialdehyde to 3-hydroxypropionic acid, which is excreted. The sequence is that of Probable malonic semialdehyde reductase RutE from Enterobacter sp. (strain 638).